The sequence spans 154 residues: Large ribosomal subunit protein uL11 (154 aa).

The protein belongs to the universal ribosomal protein uL11 family. As to quaternary structure, part of the ribosomal stalk of the 50S ribosomal subunit. Interacts with L10 and the large rRNA to form the base of the stalk. L10 forms an elongated spine to which L12 dimers bind in a sequential fashion forming a multimeric L10(L12)X complex. In terms of processing, one or more lysine residues are methylated.

Functionally, forms part of the ribosomal stalk which helps the ribosome interact with GTP-bound translation factors. The sequence is that of Large ribosomal subunit protein uL11 from Leuconostoc mesenteroides subsp. mesenteroides (strain ATCC 8293 / DSM 20343 / BCRC 11652 / CCM 1803 / JCM 6124 / NCDO 523 / NBRC 100496 / NCIMB 8023 / NCTC 12954 / NRRL B-1118 / 37Y).